The chain runs to 560 residues: Nucleoprotein (560 aa).

Positions 54-236 are binding site for the cap structure m7GTP; it reads LRKSKRGDTD…ITKDESALNI (183 aa). Residues aspartate 380 and glutamate 382 each coordinate Mn(2+). Residues glutamate 390, cysteine 497, histidine 500, and cysteine 521 each contribute to the Zn(2+) site. Aspartate 525 provides a ligand contact to Mn(2+).

This sequence belongs to the arenaviridae nucleocapsid protein family. Homomultimerizes to form the nucleocapsid. Binds to viral genomic RNA. Interacts with glycoprotein G2. Interacts with protein Z; this interaction probably directs the encapsidated genome to budding sites. Interacts with protein L; this interaction does not interfere with Z-L interaction. Interacts with host IKBKE (via Protein kinase domain); the interaction inhibits IKBKE kinase activity.

It localises to the virion. Its subcellular location is the host cytoplasm. Its function is as follows. Encapsidates the genome, protecting it from nucleases. The encapsidated genomic RNA is termed the nucleocapsid (NC). Serves as template for viral transcription and replication. The increased presence of protein N in host cell does not seem to trigger the switch from transcription to replication as observed in other negative strain RNA viruses. Through the interaction with host IKBKE, strongly inhibits the phosphorylation and nuclear translocation of host IRF3, a protein involved in interferon activation pathway, leading to the inhibition of interferon-beta and IRF3-dependent promoters activation. Also encodes a functional 3'-5' exoribonuclease that degrades preferentially dsRNA substrates and thereby participates in the suppression of interferon induction. The chain is Nucleoprotein from Homo sapiens (Human).